Reading from the N-terminus, the 852-residue chain is Tiger protein I3 (852 aa).

An N-terminal signal peptide occupies residues 1 to 18 (MKILLFFILFYLFSFSIS). Over 19 to 830 (YDEVIPLGYE…DVHQYSDARN (812 aa)) the chain is Extracellular. N-linked (GlcNAc...) asparagine glycans are attached at residues N31, N47, N67, N97, N129, N201, N215, N228, N260, N323, N352, N356, N404, N441, N476, N483, N501, N512, N574, N592, N635, N658, N661, N679, N680, N723, N757, N761, N773, N785, and N800. An IPT/TIG domain is found at 290–367 (IPSIVNSIPK…SSPIAVSIND (78 aa)). The chain crosses the membrane as a helical span at residues 831-851 (IFQNLLLSILIIIIISLFISN). A topological domain (cytoplasmic) is located at residue I852.

Its subcellular location is the membrane. The chain is Tiger protein I3 (tgrI3) from Dictyostelium discoideum (Social amoeba).